An 858-amino-acid polypeptide reads, in one-letter code: Gamma-secretase-activating protein (858 aa).

This sequence belongs to the GSAP family. As to quaternary structure, interacts with APP; specifically interacts with the CTF-alpha product of APP. Interacts with the gamma-secretase complex. In terms of processing, the protein is first synthesized as a holoprotein form of 98 kDa and rapidly processed into the gamma-secretase-activating protein 16 kDa C-terminal form, which constitutes the predominant form.

The protein localises to the golgi apparatus. It is found in the trans-Golgi network. Regulator of gamma-secretase activity, which specifically activates the production of amyloid-beta protein (amyloid-beta protein 40 and amyloid-beta protein 42), without affecting the cleavage of other gamma-secretase targets such has Notch. The gamma-secretase complex is an endoprotease complex that catalyzes the intramembrane cleavage of integral membrane proteins such as Notch receptors and APP (amyloid-beta precursor protein). Specifically promotes the gamma-cleavage of APP CTF-alpha (also named APP-CTF) by the gamma-secretase complex to generate amyloid-beta, while it reduces the epsilon-cleavage of APP CTF-alpha, leading to a low production of AICD. This chain is Gamma-secretase-activating protein (Gsap), found in Mus musculus (Mouse).